We begin with the raw amino-acid sequence, 350 residues long: 2-oxoglutarate and iron-dependent oxygenase domain-containing protein 2 (350 aa).

Positions Asp215 to Ala309 constitute a Fe2OG dioxygenase domain. Positions 235, 237, and 290 each coordinate Fe cation. Arg300 provides a ligand contact to 2-oxoglutarate.

It belongs to the OGFOD2 family. It depends on Fe(2+) as a cofactor. L-ascorbate serves as cofactor.

The chain is 2-oxoglutarate and iron-dependent oxygenase domain-containing protein 2 (OGFOD2) from Homo sapiens (Human).